The primary structure comprises 125 residues: Protein ApaG (125 aa).

Residues 1–125 (MNDTPRVCVQ…FRLAIATHIH (125 aa)) enclose the ApaG domain.

The protein is Protein ApaG of Erwinia tasmaniensis (strain DSM 17950 / CFBP 7177 / CIP 109463 / NCPPB 4357 / Et1/99).